The following is a 705-amino-acid chain: Elongation factor G (705 aa).

The tr-type G domain occupies 8–291; the sequence is EKVRNIGIMA…AVVEYLPSPI (284 aa). GTP-binding positions include 17–24, 90–94, and 144–147; these read AHIDAGKT, DTPGH, and NKMD.

Belongs to the TRAFAC class translation factor GTPase superfamily. Classic translation factor GTPase family. EF-G/EF-2 subfamily.

The protein resides in the cytoplasm. Its function is as follows. Catalyzes the GTP-dependent ribosomal translocation step during translation elongation. During this step, the ribosome changes from the pre-translocational (PRE) to the post-translocational (POST) state as the newly formed A-site-bound peptidyl-tRNA and P-site-bound deacylated tRNA move to the P and E sites, respectively. Catalyzes the coordinated movement of the two tRNA molecules, the mRNA and conformational changes in the ribosome. The sequence is that of Elongation factor G from Chloroherpeton thalassium (strain ATCC 35110 / GB-78).